A 402-amino-acid polypeptide reads, in one-letter code: MDRTETRFRKRGQITEKITTSRQPQPQNEQSPQRSTSGYPLQEVVDDEVLGPSAPGVDPSPPCRSLGWKRKREWSDESAEEPEKELAPEPEETWVVEMLCGLKMKLKQQRVSPILPEHHKGFNSQLAPGVDPSPPHRSFCWKRKMEWWDESEESLEEEPRKVLAPEPEEIWVAEMLCGLKMKLKRRRVSLVLPEHHEAFNRLLEDPVIKRFLAWDKDLRVSDKYLLAMVIAYFSRAGFPSWQYQRIHFFLALYLANDMEEDDEDSKQNIFHFLYGKNRSRIPLLRKRWFQLGRSMNPRARKKRSRIPLLRKRRFQLGRSMNPRARKNRSRIPLLRKRRFQLGRSMNLRARKNRSQIVLFQKRRFQFFCSMSGRAWVSPEELEEIQAYDPEHWVWARDRAHLS.

The interval 1–89 (MDRTETRFRK…EEPEKELAPE (89 aa)) is disordered. The segment covering 16–39 (EKITTSRQPQPQNEQSPQRSTSGY) has biased composition (polar residues). The segment covering 76–89 (DESAEEPEKELAPE) has biased composition (acidic residues).

The protein belongs to the Speedy/Ringo family.

The protein is Speedy protein E5 (SPDYE5) of Homo sapiens (Human).